A 466-amino-acid polypeptide reads, in one-letter code: 3-isopropylmalate dehydratase large subunit (466 aa).

Residues cysteine 347, cysteine 407, and cysteine 410 each contribute to the [4Fe-4S] cluster site.

The protein belongs to the aconitase/IPM isomerase family. LeuC type 1 subfamily. As to quaternary structure, heterodimer of LeuC and LeuD. It depends on [4Fe-4S] cluster as a cofactor.

The catalysed reaction is (2R,3S)-3-isopropylmalate = (2S)-2-isopropylmalate. Its pathway is amino-acid biosynthesis; L-leucine biosynthesis; L-leucine from 3-methyl-2-oxobutanoate: step 2/4. In terms of biological role, catalyzes the isomerization between 2-isopropylmalate and 3-isopropylmalate, via the formation of 2-isopropylmaleate. This is 3-isopropylmalate dehydratase large subunit from Enterobacter sp. (strain 638).